Here is a 203-residue protein sequence, read N- to C-terminus: Sperm-specific protein PHI-2B/PHI-3 (203 aa).

The span at 1–35 shows a compositional bias: basic residues; it reads MPSPSRKSRSRSRSRSKSPKRSPAKKARKTPKKPR. Disordered stretches follow at residues 1–46 and 104–203; these read MPSP…PSTL and KTSA…KSKK. Residues 41–120 form the H15 domain; sequence KKPSTLSMIV…GATGSFRVGK (80 aa). Composition is skewed to basic residues over residues 126–140 and 147–203; these read KKAK…KSSK and KAKK…KSKK.

PL-II* and PL-IV are produced by post-translational cleavage of a common precursor. In terms of tissue distribution, sperm.

It localises to the nucleus. Its subcellular location is the chromosome. In terms of biological role, linker histones are implicated in chromatin remodeling and/or transcriptional regulation during spermiogenesis, the process of spermatid maturation into spermatozoa. Protamines substitute for histones in the chromatin of sperm during the haploid phase of spermatogenesis. They compact sperm DNA into a highly condensed, stable and inactive complex. The protein is Sperm-specific protein PHI-2B/PHI-3 of Mytilus trossulus (Blue mussel).